The chain runs to 295 residues: Ribosomal protein L11 methyltransferase (295 aa).

S-adenosyl-L-methionine contacts are provided by Thr145, Gly166, Asp188, and Asn230.

It belongs to the methyltransferase superfamily. PrmA family.

It localises to the cytoplasm. It carries out the reaction L-lysyl-[protein] + 3 S-adenosyl-L-methionine = N(6),N(6),N(6)-trimethyl-L-lysyl-[protein] + 3 S-adenosyl-L-homocysteine + 3 H(+). In terms of biological role, methylates ribosomal protein L11. This is Ribosomal protein L11 methyltransferase from Shewanella amazonensis (strain ATCC BAA-1098 / SB2B).